A 188-amino-acid chain; its full sequence is UPF0301 protein Tcr_1827 (188 aa).

It belongs to the UPF0301 (AlgH) family.

The polypeptide is UPF0301 protein Tcr_1827 (Hydrogenovibrio crunogenus (strain DSM 25203 / XCL-2) (Thiomicrospira crunogena)).